Here is a 228-residue protein sequence, read N- to C-terminus: Ribulose-phosphate 3-epimerase (228 aa).

Ser-11 provides a ligand contact to substrate. Residues His-36, Asp-38, and His-69 each coordinate a divalent metal cation. The active-site Proton acceptor is Asp-38. Substrate-binding positions include His-69, 145 to 148 (GFCG), 180 to 182 (DGG), and 202 to 203 (AS). An a divalent metal cation-binding site is contributed by Asp-180. Asp-180 serves as the catalytic Proton donor.

Belongs to the ribulose-phosphate 3-epimerase family. The cofactor is a divalent metal cation.

The enzyme catalyses D-ribulose 5-phosphate = D-xylulose 5-phosphate. It participates in carbohydrate degradation. In terms of biological role, catalyzes the reversible epimerization of D-ribulose 5-phosphate to D-xylulose 5-phosphate. This Chlamydia muridarum (strain MoPn / Nigg) protein is Ribulose-phosphate 3-epimerase.